Consider the following 107-residue polypeptide: Sperm-specific class P protein 32 (107 aa).

A disordered region spans residues 1-20 (MLTIEPPSATFPASGGSSTH). One can recognise an MSP domain in the interval 1-107 (MLTIEPPSAT…GDVTILLKTN (107 aa)).

In terms of tissue distribution, expressed at higher level in testis.

This Caenorhabditis elegans protein is Sperm-specific class P protein 32 (ssp-32).